The following is a 482-amino-acid chain: UDP-N-acetylmuramate--L-alanine ligase (482 aa).

Residue 129–135 participates in ATP binding; the sequence is GTHGKTT.

It belongs to the MurCDEF family.

The protein localises to the cytoplasm. It carries out the reaction UDP-N-acetyl-alpha-D-muramate + L-alanine + ATP = UDP-N-acetyl-alpha-D-muramoyl-L-alanine + ADP + phosphate + H(+). It participates in cell wall biogenesis; peptidoglycan biosynthesis. Its function is as follows. Cell wall formation. In Acinetobacter baumannii (strain AB307-0294), this protein is UDP-N-acetylmuramate--L-alanine ligase.